A 284-amino-acid polypeptide reads, in one-letter code: Acetyl-coenzyme A carboxylase carboxyl transferase subunit beta (284 aa).

The CoA carboxyltransferase N-terminal domain maps to 24–284 (GLWYKSPTGK…LDLILNNEVR (261 aa)).

The protein belongs to the AccD/PCCB family. In terms of assembly, acetyl-CoA carboxylase is a heterohexamer composed of biotin carboxyl carrier protein (AccB), biotin carboxylase (AccC) and two subunits each of ACCase subunit alpha (AccA) and ACCase subunit beta (AccD).

Its subcellular location is the cytoplasm. It catalyses the reaction N(6)-carboxybiotinyl-L-lysyl-[protein] + acetyl-CoA = N(6)-biotinyl-L-lysyl-[protein] + malonyl-CoA. It functions in the pathway lipid metabolism; malonyl-CoA biosynthesis; malonyl-CoA from acetyl-CoA: step 1/1. Functionally, component of the acetyl coenzyme A carboxylase (ACC) complex. Biotin carboxylase (BC) catalyzes the carboxylation of biotin on its carrier protein (BCCP) and then the CO(2) group is transferred by the transcarboxylase to acetyl-CoA to form malonyl-CoA. This Flavobacterium psychrophilum (strain ATCC 49511 / DSM 21280 / CIP 103535 / JIP02/86) protein is Acetyl-coenzyme A carboxylase carboxyl transferase subunit beta.